The primary structure comprises 829 residues: Transcription activator GutR (829 aa).

Positions 42-61 (IDKIALQLGVSPNTIKSWIG) form a DNA-binding region, H-T-H motif. 200-207 (GWAGMGKT) serves as a coordination point for ATP. TPR repeat units follow at residues 697–730 (HRVL…SSTY), 736–769 (IEAY…KHNA), and 775–808 (IYYH…IDSW).

In terms of biological role, activator of the glucitol dehydrogenase gene (gutB). The protein is Transcription activator GutR (gutR) of Bacillus subtilis (strain 168).